The following is an 833-amino-acid chain: DNA helicase MCM8 (833 aa).

Residues 395 to 602 (LLKLVVNSLC…QHDHLLSEHV (208 aa)) enclose the MCM domain. 447–454 (GDPGLGKS) serves as a coordination point for ATP. Phosphoserine is present on Ser-623.

The protein belongs to the MCM family. In terms of assembly, component of the MCM8-MCM9 complex, which forms a hexamer composed of MCM8 and MCM9. Interacts with the DNA mismatch repair (MMR) complex composed at least of MSH2, MSH3, MSH6, PMS1 and MLH1. Interacts with RAD51; the interaction recruits RAD51 to DNA damage sites. Interacts with the MRN complex composed of MRE11, RAD50 and NBN/NBS1. Interacts with CDC6 and ORC2. Interacts with HROB; the interaction recruits the MCM8-MCM9 complex to DNA damage sites.

Its subcellular location is the nucleus. It localises to the chromosome. It catalyses the reaction ATP + H2O = ADP + phosphate + H(+). Functionally, component of the MCM8-MCM9 complex, a complex involved in the repair of double-stranded DNA breaks (DBSs) and DNA interstrand cross-links (ICLs) by homologous recombination (HR). Required for DNA resection by the MRE11-RAD50-NBN/NBS1 (MRN) complex by recruiting the MRN complex to the repair site and by promoting the complex nuclease activity. Probably by regulating the localization of the MNR complex, indirectly regulates the recruitment of downstream effector RAD51 to DNA damage sites including DBSs and ICLs. The MCM8-MCM9 complex is dispensable for DNA replication and S phase progression. However, may play a non-essential for DNA replication: may be involved in the activation of the prereplicative complex (pre-RC) during G(1) phase by recruiting CDC6 to the origin recognition complex (ORC). Probably by regulating HR, plays a key role during gametogenesis. Stabilizes MCM9 protein. The sequence is that of DNA helicase MCM8 (Mcm8) from Mus musculus (Mouse).